Here is a 425-residue protein sequence, read N- to C-terminus: Protein CLP1 homolog (425 aa).

ATP is bound by residues Glu18, Lys59, and 121-126 (DVGKST).

The protein belongs to the Clp1 family. Clp1 subfamily.

Its subcellular location is the nucleus. Required for endonucleolytic cleavage during polyadenylation-dependent pre-mRNA 3'-end formation. This chain is Protein CLP1 homolog (cbc), found in Drosophila grimshawi (Hawaiian fruit fly).